Here is a 302-residue protein sequence, read N- to C-terminus: Protein TILLER ANGLE CONTROL 1 (302 aa).

The short motif at 57–63 (GILTIGT) is the IGT motif element. Disordered stretches follow at residues 82-115 (ESEE…VEDE) and 159-180 (EGSS…KNKK). Acidic residues predominate over residues 99–115 (DDDDDDDEHYDHSVEDE). The segment covering 162–175 (SEISTKPDQSANDQ) has biased composition (polar residues).

This sequence belongs to the TAC family. In terms of tissue distribution, highly expressed in flower buds. Expressed in branch attachment sites, vegetative buds and young fruits.

Functionally, involved in the regulation of axillary shoot growth angle. Promotes horizontal shoot growth. This Prunus persica (Peach) protein is Protein TILLER ANGLE CONTROL 1.